Reading from the N-terminus, the 761-residue chain is Neurotrypsin (761 aa).

An N-terminal signal peptide occupies residues 1-21 (MALARCVLAVILGVLSEVARA). The disordered stretch occupies residues 26–88 (HSPLHRPHPS…PTISRRCGAG (63 aa)). Residues 54 to 63 (TPRFPLPPRA) show a composition bias toward pro residues. The 73-residue stretch at 85–157 (CGAGEPWGNA…GKVDWGYCDC (73 aa)) folds into the Kringle domain. 17 cysteine pairs are disulfide-bonded: C85/C157, C101/C141, C130/C155, C191/C255, C204/C265, C235/C245, C298/C361, C311/C371, C341/C351, C411/C475, C424/C485, C455/C465, C505/C636, C547/C563, C651/C717, C680/C694, and C707/C736. The N-linked (GlcNAc...) asparagine glycan is linked to N93. 3 SRCR domains span residues 166 to 267 (IRLV…SCAP), 273 to 373 (IRLS…TCYP), and 386 to 487 (IRLM…ICDY). The segment at 505–516 (CGLRLLHRRQKR) is zymogen activation region. The Peptidase S1 domain maps to 517–760 (IIGGNNSLRG…FVPWIKSVTS (244 aa)). N-linked (GlcNAc...) asparagine glycosylation is present at N521. The active-site Charge relay system is the H562. N-linked (GlcNAc...) asparagine glycosylation occurs at N569. D612 (charge relay system) is an active-site residue. S711 (charge relay system) is an active-site residue.

The protein belongs to the peptidase S1 family.

Its subcellular location is the secreted. In terms of biological role, plays a role in neuronal plasticity and the proteolytic action may subserve structural reorganizations associated with learning and memory operations. The protein is Neurotrypsin (Prss12) of Rattus norvegicus (Rat).